The sequence spans 491 residues: uncharacterized protein (491 aa).

The PE domain occupies 1–92 (MSFVIASPEA…GGGSYASAEI (92 aa)). Disordered stretches follow at residues 114–156 (PLVG…AGGA), 376–400 (AGGS…GNPG), and 419–491 (AGQG…GPDG). Residues 128-145 (GQPGGDGGILWGNGGNGG) show a composition bias toward gly residues. The segment covering 432-480 (GGPGGVGGHGGTAILFGDGGAGGAGAAGGPGTPDGAAGPGGSGGTGGLL) has biased composition (gly residues).

Belongs to the mycobacterial PE family. PGRS subfamily.

This is an uncharacterized protein from Mycobacterium bovis (strain ATCC BAA-935 / AF2122/97).